Reading from the N-terminus, the 268-residue chain is Undecaprenyl-diphosphatase (268 aa).

8 helical membrane passes run 8–28, 41–61, 83–103, 108–128, 144–164, 184–204, 218–238, and 246–266; these read VILG…TGHL, AFWD…IVGL, FVIG…VAGK, VLFN…ILLW, FPLL…IPGV, AAEF…AYDF, IVAI…KTFL, and FVVF…ALAL.

This sequence belongs to the UppP family.

The protein localises to the cell inner membrane. It carries out the reaction di-trans,octa-cis-undecaprenyl diphosphate + H2O = di-trans,octa-cis-undecaprenyl phosphate + phosphate + H(+). Its function is as follows. Catalyzes the dephosphorylation of undecaprenyl diphosphate (UPP). Confers resistance to bacitracin. This chain is Undecaprenyl-diphosphatase, found in Bradyrhizobium diazoefficiens (strain JCM 10833 / BCRC 13528 / IAM 13628 / NBRC 14792 / USDA 110).